A 482-amino-acid chain; its full sequence is Alpha-ketoglutarate semialdehyde dehydrogenase (482 aa).

Residues 1 to 28 (MTDPSKNYVNGEWVTSETGETTEVTNPA) are disordered. Low complexity predominate over residues 11 to 25 (GEWVTSETGETTEVT). Cys284 is an active-site residue.

This sequence belongs to the aldehyde dehydrogenase family. As to quaternary structure, homotetramer.

It carries out the reaction 2,5-dioxopentanoate + NADP(+) + H2O = 2-oxoglutarate + NADPH + 2 H(+). The protein operates within carbohydrate metabolism; D-xylose degradation. Its function is as follows. Alpha-ketoglutarate semialdehyde dehydrogenase involved in the degradation of D-xylose, a major component of hemicelluloses such as xylan. Catalyzes the fifth reaction in the xylose utilization pathway through dehydratation of alpha-ketoglutarate semialdehyde (2,5-dioxopentanoate) into alpha-ketoglutarate. The chain is Alpha-ketoglutarate semialdehyde dehydrogenase from Haloferax volcanii (strain ATCC 29605 / DSM 3757 / JCM 8879 / NBRC 14742 / NCIMB 2012 / VKM B-1768 / DS2) (Halobacterium volcanii).